A 218-amino-acid polypeptide reads, in one-letter code: Esterase FPY3 (218 aa).

Residues Ser-95, Asp-163, and His-190 each act as charge relay system in the active site.

This sequence belongs to the LovG family.

It functions in the pathway secondary metabolite biosynthesis. Its function is as follows. Esterase; part of the gene cluster that mediates the biosynthesis of the gamma-pyrones fusapyrone (FPY) and deoxyfusapyrone (dFPY). FPY is an undecaketide and thus likely synthesized by the polyketide synthase FPY1 from acetyl-CoA functioning as starter unit and the addition of 10 malonyl-CoA extender units by successive Claisen-condensations. Next to this, FPY shares some rare features: C-glycosylated 4-deoxyglucose at C-3, a gem-dimethyl group at C-13, and an alpha-beta to beta-gamma double bond shift at C-20. During FPY biosynthesis mono-C-methyl groups are transferred to the tetra-, penta-, hexa- and heptaketide, while two C-methyl groups are transferred to the nonaketide, suggesting that the CMet domain is programmed to selectively catalyze two successive C-alpha-methylation reactions of the nonaketide, while other alpha-carbons are non- or mono-methylated only. While the origin of the 4'-deoxyglucose moiety remains opaque, its transfer to C-3 is most likely mediated by the C-glycosyltransferase FPY2. Next to this, the hydroxyl group present at C-33 and discriminating between FPY and dFPY, is likely to be installed by the cytochrome P450 monooxygenase FPY7. No putative function can be predicted for the remaining genes FPY3-FPY6. This chain is Esterase FPY3, found in Fusarium mangiferae (Mango malformation disease fungus).